The sequence spans 301 residues: Very-long-chain aldehyde decarbonylase GL1-10 (301 aa).

3 helical membrane-spanning segments follow: residues 36 to 56, 94 to 114, and 187 to 207; these read VLFW…PLPV, FFLV…MVGI, and SFVG…WIVL. The Fatty acid hydroxylase domain occupies 131–265; it reads LVYFLVEDYL…FTYCDYLYGT (135 aa).

It belongs to the sterol desaturase family. As to quaternary structure, homodimer. In terms of tissue distribution, expressed ubiquitously.

The protein resides in the endoplasmic reticulum membrane. It carries out the reaction a long-chain fatty aldehyde + 2 NADPH + O2 + H(+) = a long-chain alkane + formate + 2 NADP(+) + H2O. In terms of biological role, aldehyde decarbonylase involved in the conversion of aldehydes to alkanes. Core component of a very-long-chain alkane synthesis complex. The sequence is that of Very-long-chain aldehyde decarbonylase GL1-10 from Oryza sativa subsp. japonica (Rice).